Here is a 163-residue protein sequence, read N- to C-terminus: MFLFKTTNNLRKSLSNKFFCTRYSKNHLWISINNNNNSNNNNNNNNNIIIGTLGLTENGPINKFDDVLYIKFPIIKDENQVDDEPLTISLDTISDQILLNSPIRNCKLISINQDVLDYPNYINSSPMSKGWLCKIKFSNINDFNSLMNKNEYDNYCKNKIIKI.

A mitochondrion-targeting transit peptide spans 1–23 (MFLFKTTNNLRKSLSNKFFCTRY). One can recognise a Lipoyl-binding domain in the interval 50 to 136 (IGTLGLTENG…MSKGWLCKIK (87 aa)).

The protein belongs to the GcvH family.

The protein localises to the mitochondrion. The protein is Glycine cleavage system H-like protein gcvH5, mitochondrial (gcvH5) of Dictyostelium discoideum (Social amoeba).